Reading from the N-terminus, the 1423-residue chain is MGKAMLKLCITLMVLVFSGTAESKGVMRREDESFPHLKSRLCGGLNGLGEDAYRSHCVVYYTKRMGVVSLDHVEELANHCLRIVKQCCAEGAADDCLQTELAAVQEQVCTRMSEAKDVPLVGRCCALAGSERHDCFHHAGGVAEGEGAWPHALPVTSPPEYDSVTVCALHATANARLYDTLLWEFSRRYPSASDSHLIALANEFITGLTTCCLVEEEHGACLATLREDFKHKLTEASHKSQNLCKALKSLGKEKFEDRIIVRFTQRAPQAPFELIQKLAHRFEVLAEKCCELGHSDRCLVEERYTVDDELCLEQSFVATCPRLSSCCSLSGSSRAQCLETVPVLETSDKASPATPTLPISEQCTLWAGKPVEFHKRVVWQISHRYPTTGVAQVEALAHHYLEHLTICCASEDKDTCIATEVAEFKSEVEKVHTKSDWWCRMSDLLGTDRFNLLLIVTYSQRVPQATFEQVEEISHHFALITRKCCSHRKNGSCFLEERYALHDAICRDEAWLSGLAEVSRCCAMDGRARILCFDELSSHLNASVEERPELCSTSLCSKYHDLGFEFKQRVAYGFGQRFPKAAMGQMRDLISKYLAMVQRCCDAMSDFKMDVEEVELRAHRLCLDAHQLGEEKLADRIMIGLAQRISVASFVNISSVALHFAQSVIKCCDADHEKTCFMEQEFALEDQVCSDSEALSHIPSVSRCCELHPFDRSVCFHSLRSTQASTLASTHVAVGKDDSLPGHVEECQAFASGNHSLTDQVMFEFARRHPRASVSQVESLARLYSELARACCALTDADQESCLHTARSQARQEALKSLQRSERICNTLSAIGKEKFEDRIVIALSQKATDASFEQILEIANRMSRGLARCCEQGNNVGCLMDHRHALHEAICSTPDGSLPQSVAACCNTSNTSTTTSTTTSTTTSTTTSTTTSTTSTTTAAEIRDSCFDNLQANVSRAHAPFYSNSQLCLMKLRTPHRFLERFLWEFGRRHPQAALSQVEELAEMYVKMTDSCCGKLHSKSCFTEQRHTIHMEIRHAYAEVQHICGSLHSRGEETFIQREVTLLSQKAPNASFEKVSQLARHFLSLAKKCCAPDHAAGCFLEEPYAIHDEVCRDDEVVDQVGGLATCCRMSGTSRAKCLAQLPRDLGRHGNRETPEFDELKICELRRDNPAVLMEKILYEFGRRHSDSAVSEVKNFAQKFSHSVTECCTSEKTHECFVEKRAAIEKVIKDEEAKGNLTCQRLKAQGVEHFEQLVILNFARAAKSLPMEKVVEFAHRFTRIAGQCCEHDTHCLIDESFHLHAEMCGDHGYIMAHPGVANCCKSDVSEQGTCFKIHEDVHHAEEILSKDVSPAHPTAERVCLRYRQFPEKFINLALFELVHRLPLLESSVLRRKALAYTGFTDDCCRAVDKTACFTEKLEAIKSS.

The N-terminal stretch at 1–23 (MGKAMLKLCITLMVLVFSGTAES) is a signal peptide. Residues 24 to 29 (KGVMRR) constitute a propeptide that is removed on maturation. Albumin domains follow at residues 29-230 (REDE…EDFK), 231-426 (HKLT…EFKS), 427-608 (EVEK…SDFK), 609-811 (MDVE…SQAR), 812-1031 (QEAL…HTIH), 1032-1226 (MEIR…AIEK), and 1227-1422 (VIKD…AIKS). Residue His36 coordinates Cu cation. Cystine bridges form between Cys42–Cys88, Cys87–Cys96, Cys109–Cys125, Cys124–Cys135, Cys167–Cys212, Cys211–Cys221, Cys244–Cys290, Cys289–Cys298, Cys311–Cys327, Cys326–Cys337, Cys363–Cys408, Cys407–Cys416, Cys439–Cys485, Cys484–Cys493, Cys506–Cys522, and Cys521–Cys532. Asn490 carries N-linked (GlcNAc...) asparagine glycosylation. Asn541 carries an N-linked (GlcNAc...) asparagine glycan. 11 disulfides stabilise this stretch: Cys556/Cys601, Cys622/Cys668, Cys667/Cys676, Cys689/Cys705, Cys704/Cys715, Cys747/Cys792, Cys791/Cys802, Cys825/Cys871, Cys870/Cys879, Cys892/Cys907, and Cys906/Cys947. Asn652 carries N-linked (GlcNAc...) asparagine glycosylation. Asn754 carries N-linked (GlcNAc...) asparagine glycosylation. N-linked (GlcNAc...) asparagine glycosylation is found at Asn908 and Asn911. The interval 910-936 (SNTSTTTSTTTSTTTSTTTSTTTSTTS) is disordered. A run of 7 repeats spans residues 913–916 (STTT), 917–920 (STTT), 921–924 (STTT), 925–928 (STTT), 929–932 (STTT), 933–935 (STT), and 936–939 (STTT). The tract at residues 913 to 939 (STTTSTTTSTTTSTTTSTTTSTTSTTT) is 7 X 4 AA tandem repeats of S-T-T-T. Asn954 is a glycosylation site (N-linked (GlcNAc...) asparagine). 8 disulfide bridges follow: Cys969-Cys1014, Cys1013-Cys1022, Cys1045-Cys1091, Cys1090-Cys1099, Cys1112-Cys1128, Cys1127-Cys1138, Cys1163-Cys1208, and Cys1207-Cys1216. N-linked (GlcNAc...) asparagine glycosylation is present at Asn1070. N-linked (GlcNAc...) asparagine glycosylation occurs at Asn1236. Intrachain disulfides connect Cys1239/Cys1285, Cys1284/Cys1291, Cys1304/Cys1320, Cys1319/Cys1330, Cys1359/Cys1404, and Cys1403/Cys1412.

Belongs to the ALB/AFP/VDB family. As to expression, plasma.

Its subcellular location is the secreted. Its function is as follows. Serum albumin, the main protein of plasma, has a good binding capacity for water, Ca(2+), Na(+), K(+), fatty acids, hormones, bilirubin and drugs. Its main function is the regulation of the colloidal osmotic pressure of blood. The chain is Serum albumin SDS-1 (SDS-1) from Petromyzon marinus (Sea lamprey).